Consider the following 267-residue polypeptide: Aliphatic sulfonates import ATP-binding protein SsuB 1 (267 aa).

The ABC transporter domain maps to 35–249 (VRVRGLRRVF…RRADPAFDRL (215 aa)). 67–74 (GRSGSGKS) provides a ligand contact to ATP.

It belongs to the ABC transporter superfamily. Aliphatic sulfonates importer (TC 3.A.1.17.2) family. As to quaternary structure, the complex is composed of two ATP-binding proteins (SsuB), two transmembrane proteins (SsuC) and a solute-binding protein (SsuA).

Its subcellular location is the cell membrane. The catalysed reaction is ATP + H2O + aliphatic sulfonate-[sulfonate-binding protein]Side 1 = ADP + phosphate + aliphatic sulfonateSide 2 + [sulfonate-binding protein]Side 1.. Part of the ABC transporter complex SsuABC involved in aliphatic sulfonates import. Responsible for energy coupling to the transport system. This chain is Aliphatic sulfonates import ATP-binding protein SsuB 1, found in Frankia alni (strain DSM 45986 / CECT 9034 / ACN14a).